Here is a 722-residue protein sequence, read N- to C-terminus: Mesentericin-Y105 transport/processing ATP-binding protein MesD (722 aa).

Residues 16–143 (QVDERDCGVA…EEWTGVSIFI (128 aa)) enclose the Peptidase C39 domain. The active site involves C22. The next 8 membrane-spanning stretches (helical) occupy residues 171–191 (LLVI…ILGS), 210–230 (LGIV…LSYA), 242–262 (LSID…MSFF), 287–307 (TMLS…VLVV), 311–331 (TLFL…WLFM), 401–421 (SLLQ…LVMT), 429–449 (LITY…IINL), and 518–538 (IALV…LVNF). Residues 173 to 455 (VINIVIAALL…IINLQTKLQQ (283 aa)) form the ABC transmembrane type-1 domain. The region spanning 489–722 (LVADHITYKY…GGFYASLFNH (234 aa)) is the ABC transporter domain. Residue 522–529 (GISGSGKS) participates in ATP binding.

Belongs to the ABC transporter superfamily.

It localises to the cell membrane. Its function is as follows. Involved in the export process of the bacteriocin mesentericin-Y105. This chain is Mesentericin-Y105 transport/processing ATP-binding protein MesD (mesD), found in Leuconostoc mesenteroides.